The chain runs to 572 residues: Probable pyruvate decarboxylase C186.09 (572 aa).

Residues Asp38 and His125 each coordinate substrate. A thiamine pyrophosphate binding region spans residues 400 to 482; the sequence is DSWFGGMRIT…FLINNRGYTI (83 aa). Positions 450, 477, and 479 each coordinate Mg(2+). Glu483 is a binding site for substrate.

This sequence belongs to the TPP enzyme family. Homotetramer. Requires a metal cation as cofactor. It depends on thiamine diphosphate as a cofactor.

It carries out the reaction a 2-oxocarboxylate + H(+) = an aldehyde + CO2. The chain is Probable pyruvate decarboxylase C186.09 from Schizosaccharomyces pombe (strain 972 / ATCC 24843) (Fission yeast).